Here is a 261-residue protein sequence, read N- to C-terminus: ATP synthase subunit a (261 aa).

Transmembrane regions (helical) follow at residues 31–51 (IAFTNSAMWMVVTLAALLIFM), 64–84 (WQAAVESFTGFVAGMMATNIG), 97–117 (LFMFILIANIMGMMPTGVVGV), 126–146 (LTVTGVLAVISFSIVLVVGFW), 166–188 (IPMIFVIELFSFLIRPFSLGLRL), 201–223 (VLAGFVINGINAGALTVAIVSIP), and 235–255 (ELLVCAIQAYVFALLTSLYLN).

The protein belongs to the ATPase A chain family. In terms of assembly, F-type ATPases have 2 components, CF(1) - the catalytic core - and CF(0) - the membrane proton channel. CF(1) has five subunits: alpha(3), beta(3), gamma(1), delta(1), epsilon(1). CF(0) has three main subunits: a(1), b(2) and c(9-12). The alpha and beta chains form an alternating ring which encloses part of the gamma chain. CF(1) is attached to CF(0) by a central stalk formed by the gamma and epsilon chains, while a peripheral stalk is formed by the delta and b chains.

It is found in the cell inner membrane. Functionally, key component of the proton channel; it plays a direct role in the translocation of protons across the membrane. The sequence is that of ATP synthase subunit a from Rhizorhabdus wittichii (strain DSM 6014 / CCUG 31198 / JCM 15750 / NBRC 105917 / EY 4224 / RW1) (Sphingomonas wittichii).